The chain runs to 658 residues: Translation factor GUF1, mitochondrial (658 aa).

A mitochondrion-targeting transit peptide spans Met1–Asn40. One can recognise a tr-type G domain in the interval Asp60 to Val240. Residues Ala69–Ser76, Asp133–His137, and Asn187–Asp190 contribute to the GTP site.

The protein belongs to the TRAFAC class translation factor GTPase superfamily. Classic translation factor GTPase family. LepA subfamily.

The protein resides in the mitochondrion inner membrane. The enzyme catalyses GTP + H2O = GDP + phosphate + H(+). Functionally, promotes mitochondrial protein synthesis. May act as a fidelity factor of the translation reaction, by catalyzing a one-codon backward translocation of tRNAs on improperly translocated ribosomes. Binds to mitochondrial ribosomes in a GTP-dependent manner. This is Translation factor GUF1, mitochondrial from Paracoccidioides brasiliensis (strain Pb18).